The following is an 847-amino-acid chain: MFRCWSAILILGFIFLASEGRPTKESGYGLKSYQPLTRLRHKQEKSQESSRIKEFLIHDGPFGSCENKYCGLGRHCVINRETRHAECACMDLCKQHYKPVCGSDGEFYENHCEVHRAACLKKQKITIVHNEDCFFEGDNCMAIEYSKMKSMLLDLQNQKYITQENENPNSDDISRKKPLVDQMFKYFDADSNGLVDINELTQVIKQEELNKDLSDCTLYDLLKYDDFNADKHLALEEFYRAFQVIQLSLPEDQRVSITAATVGQSAVLSCAIVGTLRPPIIWKRNNIVLNNLDLEDINDFGDDGSLYITKVTTVHMGNYTCYADGYENVRQTHIFQVNVPPVIRVYPESQAREPGVTASLRCHAEGIPDPQLGWLKNGIDITPKLSKQLTLQANGSEVHISNVRYEDTGAYTCIARNEAGVDEDISSLFVEDSARKTLANILWREEGLGIGNMFYVFYEDGIKVIQPTECEFQRHIKPSEKLLGYQDEVCPKAEEDEVQRCVWASAVNVKDKFIYVAQPTLDRILIVDVQSQKVVQAVSTDPVPVKLHYDKSHDQVWVLSWGSMEKTSPTLQVITLASGNVPHHTIHTQPVGKQFDRVDDFFIPTPTLIITHMRFGFILHKDESALHKIDLETMSYIKTINLKDSRCIPLSLAYTHLGGYYFISCKADITGATPPQLVVDSVTDSIIGFNSDVTGTPYVSPDGHYLVSVNDVKGLVRVQYITIRGEILDAFDIHTNLHISDLAFQPSFTEAHQYNIYGSSSQQTDVLFVELSSGKVKMIKSLKEPLKTEDWPWSQKNRHIQGSGLFGQYLMTPSKDSLFILDGRLNKLNCEITEVQKGNTVVWVGDA.

The N-terminal stretch at 1–20 (MFRCWSAILILGFIFLASEG) is a signal peptide. The Kazal-like domain maps to 81 to 135 (ETRHAECACMDLCKQHYKPVCGSDGEFYENHCEVHRAACLKKQKITIVHNEDCFF). 3 disulfide bridges follow: Cys87–Cys119, Cys93–Cys112, and Cys101–Cys133. 2 EF-hand domains span residues 175-210 (RKKP…EELN) and 211-246 (KDLS…QVIQ). Residues Asp188, Asp190, Asn192, Glu199, Asp226, Asn228, Asp230, His232, and Glu237 each coordinate Ca(2+). Ig-like domains follow at residues 250-338 (PEDQ…FQVN) and 341-426 (PVIR…EDIS). Cystine bridges form between Cys270–Cys321 and Cys362–Cys413. N-linked (GlcNAc...) asparagine glycans are attached at residues Asn318 and Asn394.

It is found in the secreted. The sequence is that of Follistatin-related protein 5 (Fstl5) from Mus musculus (Mouse).